A 181-amino-acid polypeptide reads, in one-letter code: Endoglucanase (181 aa).

The cysteines at positions 4 and 16 are disulfide-linked. Asp-24 (nucleophile) is an active-site residue. 5 disulfide bridges follow: Cys-30–Cys-69, Cys-32–Cys-176, Cys-65–Cys-178, Cys-72–Cys-157, and Cys-103–Cys-113. Asp-132 acts as the Proton donor in catalysis.

Digestive gland.

The catalysed reaction is Endohydrolysis of (1-&gt;4)-beta-D-glucosidic linkages in cellulose, lichenin and cereal beta-D-glucans.. Its function is as follows. Active towards the soluble carboxymethylcellulose (CMC). Possesses expansin activity too. This Mytilus edulis (Blue mussel) protein is Endoglucanase.